Here is a 251-residue protein sequence, read N- to C-terminus: Uridylate kinase (251 aa).

26–29 contributes to the ATP binding site; the sequence is KLGG. Residue G67 coordinates UMP. Residues G68 and R72 each contribute to the ATP site. UMP is bound by residues D87 and 148–155; that span reads MGLPYFST. The ATP site is built by F181 and D184.

It belongs to the UMP kinase family. Homohexamer.

Its subcellular location is the cytoplasm. The enzyme catalyses UMP + ATP = UDP + ADP. Its pathway is pyrimidine metabolism; CTP biosynthesis via de novo pathway; UDP from UMP (UMPK route): step 1/1. Inhibited by UTP. Catalyzes the reversible phosphorylation of UMP to UDP. This Mycolicibacterium vanbaalenii (strain DSM 7251 / JCM 13017 / BCRC 16820 / KCTC 9966 / NRRL B-24157 / PYR-1) (Mycobacterium vanbaalenii) protein is Uridylate kinase.